Reading from the N-terminus, the 102-residue chain is Small ribosomal subunit protein uS10 (102 aa).

This sequence belongs to the universal ribosomal protein uS10 family. In terms of assembly, part of the 30S ribosomal subunit.

In terms of biological role, involved in the binding of tRNA to the ribosomes. The sequence is that of Small ribosomal subunit protein uS10 from Malacoplasma penetrans (strain HF-2) (Mycoplasma penetrans).